Consider the following 109-residue polypeptide: UPF0060 membrane protein HEAR0108 (109 aa).

The next 4 helical transmembrane spans lie at 7-27 (VALF…PYLW), 33-53 (SIWL…LLSL), 63-83 (AAYG…VDGI), and 87-107 (NWDV…MFAP).

This sequence belongs to the UPF0060 family.

It localises to the cell inner membrane. The protein is UPF0060 membrane protein HEAR0108 of Herminiimonas arsenicoxydans.